The sequence spans 339 residues: Nicotinate-nucleotide--dimethylbenzimidazole phosphoribosyltransferase (339 aa).

Residue glutamate 306 is the Proton acceptor of the active site.

The protein belongs to the CobT family.

It catalyses the reaction 5,6-dimethylbenzimidazole + nicotinate beta-D-ribonucleotide = alpha-ribazole 5'-phosphate + nicotinate + H(+). It functions in the pathway nucleoside biosynthesis; alpha-ribazole biosynthesis; alpha-ribazole from 5,6-dimethylbenzimidazole: step 1/2. In terms of biological role, catalyzes the synthesis of alpha-ribazole-5'-phosphate from nicotinate mononucleotide (NAMN) and 5,6-dimethylbenzimidazole (DMB). This Brucella anthropi (strain ATCC 49188 / DSM 6882 / CCUG 24695 / JCM 21032 / LMG 3331 / NBRC 15819 / NCTC 12168 / Alc 37) (Ochrobactrum anthropi) protein is Nicotinate-nucleotide--dimethylbenzimidazole phosphoribosyltransferase.